An 86-amino-acid chain; its full sequence is Small ribosomal subunit protein uS17 (86 aa).

This sequence belongs to the universal ribosomal protein uS17 family. As to quaternary structure, part of the 30S ribosomal subunit.

Its function is as follows. One of the primary rRNA binding proteins, it binds specifically to the 5'-end of 16S ribosomal RNA. The sequence is that of Small ribosomal subunit protein uS17 from Marinomonas sp. (strain MWYL1).